Here is a 304-residue protein sequence, read N- to C-terminus: tRNA pseudouridine synthase B (304 aa).

The active-site Nucleophile is aspartate 44.

This sequence belongs to the pseudouridine synthase TruB family. Type 1 subfamily.

It catalyses the reaction uridine(55) in tRNA = pseudouridine(55) in tRNA. Its function is as follows. Responsible for synthesis of pseudouridine from uracil-55 in the psi GC loop of transfer RNAs. This chain is tRNA pseudouridine synthase B, found in Novosphingobium aromaticivorans (strain ATCC 700278 / DSM 12444 / CCUG 56034 / CIP 105152 / NBRC 16084 / F199).